Consider the following 719-residue polypeptide: Glutamate--tRNA ligase, cytoplasmic (719 aa).

Ser93 lines the ATP pocket. The tract at residues 176–205 is disordered; the sequence is SGKPVAAPKSKDSQQAVKGDGQDKGKPEVD. Residues 195–204 are compositionally biased toward basic and acidic residues; it reads DGQDKGKPEV. An L-glutamate-binding site is contributed by 217 to 219; the sequence is RFA. Residues 220–230 carry the 'HIGH' region motif; it reads PEPSGYLHIGH. His227 is a binding site for ATP. Residues 393-397 and Arg411 each bind L-glutamate; that span reads YDFAC. Residues Glu414 and 448–452 contribute to the ATP site; that span reads LLSKR. Residues 448 to 452 carry the 'KMSKS' region motif; sequence LLSKR.

Belongs to the class-I aminoacyl-tRNA synthetase family. Glutamate--tRNA ligase type 2 subfamily. In terms of assembly, interacts with GLN2, COL4 and RPP13L4/ZAR1.

It localises to the cytoplasm. The protein resides in the cytosol. The catalysed reaction is tRNA(Glu) + L-glutamate + ATP = L-glutamyl-tRNA(Glu) + AMP + diphosphate. In terms of biological role, catalyzes the attachment of glutamate to tRNA(Glu) in a two-step reaction: glutamate is first activated by ATP to form Glu-AMP and then transferred to the acceptor end of tRNA(Glu). This chain is Glutamate--tRNA ligase, cytoplasmic, found in Arabidopsis thaliana (Mouse-ear cress).